A 169-amino-acid chain; its full sequence is Disulfide bond formation protein B (169 aa).

Topologically, residues Met1–Ser13 are cytoplasmic. A helical membrane pass occupies residues Trp14–Thr30. Residues Phe31–Val48 are Periplasmic-facing. Cys40 and Cys43 form a disulfide bridge. The chain crosses the membrane as a helical span at residues Ala49–Pro64. The Cytoplasmic segment spans residues Asn65 to Trp71. A helical transmembrane segment spans residues Cys72 to Leu89. Topologically, residues Glu90–Gln144 are periplasmic. Cysteines 104 and 130 form a disulfide. A helical membrane pass occupies residues Trp145–Ala163. Over Gln164 to Lys169 the chain is Cytoplasmic.

This sequence belongs to the DsbB family.

It localises to the cell inner membrane. Its function is as follows. Required for disulfide bond formation in some periplasmic proteins. Acts by oxidizing the DsbA protein. In Aliivibrio fischeri (strain ATCC 700601 / ES114) (Vibrio fischeri), this protein is Disulfide bond formation protein B.